A 539-amino-acid polypeptide reads, in one-letter code: Propionyl-CoA carboxylase beta chain, mitochondrial (539 aa).

The N-terminal 28 residues, 1–28, are a transit peptide targeting the mitochondrion; sequence MAAALRVAAVGARLSVLASGLRAAVRSL. The 259-residue stretch at 32–290 folds into the CoA carboxyltransferase N-terminal domain; that stretch reads ATSVNERIEN…SSQDPAPVRE (259 aa). Positions 32-533 are carboxyltransferase; the sequence is ATSVNERIEN…SKKVQRPWRK (502 aa). A Phosphoserine modification is found at S71. Residue K99 is modified to N6-acetyllysine; alternate. Residue K99 is modified to N6-succinyllysine; alternate. Residue K248 is modified to N6-succinyllysine. The CoA carboxyltransferase C-terminal domain occupies 294–533; the sequence is PSDRLVPELD…SKKVQRPWRK (240 aa). Residues 325–358 form an acyl-CoA binding region; the sequence is DEREFFEIMPNYAKNIIVGFARMNGRTVGIVGNQ. An N6-acetyllysine; alternate mark is found at K474 and K489. N6-succinyllysine; alternate is present on residues K474 and K489.

This sequence belongs to the AccD/PCCB family. As to quaternary structure, the holoenzyme is a dodecamer composed of 6 PCCA/alpha subunits and 6 PCCB/beta subunits.

It localises to the mitochondrion matrix. It catalyses the reaction propanoyl-CoA + hydrogencarbonate + ATP = (S)-methylmalonyl-CoA + ADP + phosphate + H(+). The catalysed reaction is butanoyl-CoA + hydrogencarbonate + ATP = (2S)-ethylmalonyl-CoA + ADP + phosphate + H(+). It participates in metabolic intermediate metabolism; propanoyl-CoA degradation; succinyl-CoA from propanoyl-CoA: step 1/3. In terms of biological role, this is one of the 2 subunits of the biotin-dependent propionyl-CoA carboxylase (PCC), a mitochondrial enzyme involved in the catabolism of odd chain fatty acids, branched-chain amino acids isoleucine, threonine, methionine, and valine and other metabolites. Propionyl-CoA carboxylase catalyzes the carboxylation of propionyl-CoA/propanoyl-CoA to D-methylmalonyl-CoA/(S)-methylmalonyl-CoA. Within the holoenzyme, the alpha subunit catalyzes the ATP-dependent carboxylation of the biotin carried by the biotin carboxyl carrier (BCC) domain, while the beta subunit then transfers the carboxyl group from carboxylated biotin to propionyl-CoA. Propionyl-CoA carboxylase also significantly acts on butyryl-CoA/butanoyl-CoA, which is converted to ethylmalonyl-CoA/(2S)-ethylmalonyl-CoA at a much lower rate. Other alternative minor substrates include (2E)-butenoyl-CoA/crotonoyl-CoA. The protein is Propionyl-CoA carboxylase beta chain, mitochondrial of Homo sapiens (Human).